The primary structure comprises 78 residues: Small ribosomal subunit protein uS17 (78 aa).

It belongs to the universal ribosomal protein uS17 family. Part of the 30S ribosomal subunit.

One of the primary rRNA binding proteins, it binds specifically to the 5'-end of 16S ribosomal RNA. The sequence is that of Small ribosomal subunit protein uS17 from Pelagibacter ubique (strain HTCC1062).